A 194-amino-acid polypeptide reads, in one-letter code: uncharacterized protein (194 aa).

Residues 77 to 92 (QTQPQHQTLSQHLPQT) are compositionally biased toward polar residues. The segment at 77–96 (QTQPQHQTLSQHLPQTHHTD) is disordered. The chain crosses the membrane as a helical span at residues 169-189 (FWEILLLIILIAVLVYGIYWL).

Its subcellular location is the host membrane. It is found in the virion. This is an uncharacterized protein from Acanthamoeba polyphaga (Amoeba).